A 236-amino-acid chain; its full sequence is Alpha-tubulin N-acetyltransferase (236 aa).

An N-acetyltransferase domain is found at 21–201 (ASVPDGVSRW…NKFVVFHGFF (181 aa)). Acetyl-CoA contacts are provided by residues 134-147 (FYVDESCQRQGYGK) and 171-180 (SDKLLGFMKK). The disordered stretch occupies residues 217–236 (SPTGAAAAATGTKAKNEMPG). Residues 219-229 (TGAAAAATGTK) are compositionally biased toward low complexity.

This sequence belongs to the acetyltransferase ATAT1 family.

It catalyses the reaction L-lysyl-[alpha-tubulin] + acetyl-CoA = N(6)-acetyl-L-lysyl-[alpha-tubulin] + CoA + H(+). Functionally, specifically acetylates 'Lys-40' in alpha-tubulin on the lumenal side of microtubules. Promotes microtubule destabilization and accelerates microtubule dynamics; this activity may be independent of acetylation activity. Acetylates alpha-tubulin with a slow enzymatic rate, due to a catalytic site that is not optimized for acetyl transfer. Enters the microtubule through each end and diffuses quickly throughout the lumen of microtubules. Acetylates only long/old microtubules because of its slow acetylation rate since it does not have time to act on dynamically unstable microtubules before the enzyme is released. This chain is Alpha-tubulin N-acetyltransferase, found in Leishmania braziliensis.